The primary structure comprises 59 residues: Large ribosomal subunit protein uL30 (59 aa).

This sequence belongs to the universal ribosomal protein uL30 family. In terms of assembly, part of the 50S ribosomal subunit.

The sequence is that of Large ribosomal subunit protein uL30 from Citrobacter koseri (strain ATCC BAA-895 / CDC 4225-83 / SGSC4696).